The primary structure comprises 525 residues: Ribosomal protein uS12 methylthiotransferase RimO (525 aa).

Residues 1-20 (MPKISTESVNTTIAPSQPAS) are compositionally biased toward polar residues. Residues 1 to 44 (MPKISTESVNTTIAPSQPASTAPKDTATLFNPAKPTATPAQSSI) form a disordered region. Positions 82 to 192 (PKIGFVSLGC…VIRAVALHVP (111 aa)) constitute an MTTase N-terminal domain. Residues cysteine 91, cysteine 127, cysteine 156, cysteine 230, cysteine 234, and cysteine 237 each coordinate [4Fe-4S] cluster. Positions 216–453 (LTPSHYAYLK…MTLQQDISAQ (238 aa)) constitute a Radical SAM core domain. The 70-residue stretch at 456–525 (QEKIGKTLMV…EYDLFASYQA (70 aa)) folds into the TRAM domain.

This sequence belongs to the methylthiotransferase family. RimO subfamily. The cofactor is [4Fe-4S] cluster.

It is found in the cytoplasm. The catalysed reaction is L-aspartate(89)-[ribosomal protein uS12]-hydrogen + (sulfur carrier)-SH + AH2 + 2 S-adenosyl-L-methionine = 3-methylsulfanyl-L-aspartate(89)-[ribosomal protein uS12]-hydrogen + (sulfur carrier)-H + 5'-deoxyadenosine + L-methionine + A + S-adenosyl-L-homocysteine + 2 H(+). Catalyzes the methylthiolation of an aspartic acid residue of ribosomal protein uS12. The polypeptide is Ribosomal protein uS12 methylthiotransferase RimO (Psychrobacter arcticus (strain DSM 17307 / VKM B-2377 / 273-4)).